The primary structure comprises 173 residues: Plasmolipin (173 aa).

Over M1–S34 the chain is Cytoplasmic. An MARVEL domain is found at F31–R160. The chain crosses the membrane as a helical span at residues I35 to A55. Residues S56–W67 lie on the Extracellular side of the membrane. The chain crosses the membrane as a helical span at residues V68 to L88. Residues S89–P98 lie on the Cytoplasmic side of the membrane. The helical transmembrane segment at W99 to L119 threads the bilayer. Topologically, residues A120–A138 are extracellular. Residues F139–W159 form a helical membrane-spanning segment. Residues R160–V173 are Cytoplasmic-facing.

It belongs to the MAL family. Forms oligomers. Expressed in the posterior midgut.

It localises to the cell membrane. Its subcellular location is the myelin membrane. The protein resides in the apical cell membrane. It is found in the recycling endosome membrane. The protein localises to the vesicle. Functionally, main component of the myelin sheath that plays an important role in myelin membrane biogenesis and myelination. Plays an essential function in apical endocytosis. Plays an important role by activating the Notch signaling pathway, which is essential for cell differentiation and results in correct patterning of the intestinal epithelium, particularly of the posterior gut absorptive cells. The protein is Plasmolipin (pllp) of Danio rerio (Zebrafish).